A 648-amino-acid polypeptide reads, in one-letter code: Threonine--tRNA ligase (648 aa).

In terms of domain architecture, TGS spans 1-61 (MIDIILPDGS…INTATVKAIT (61 aa)). The catalytic stretch occupies residues 243-549 (DHRKLGRELE…LIEHYSGKLP (307 aa)). Zn(2+) is bound by residues cysteine 349, histidine 400, and histidine 526.

This sequence belongs to the class-II aminoacyl-tRNA synthetase family. As to quaternary structure, homodimer. It depends on Zn(2+) as a cofactor.

The protein localises to the cytoplasm. It catalyses the reaction tRNA(Thr) + L-threonine + ATP = L-threonyl-tRNA(Thr) + AMP + diphosphate + H(+). Functionally, catalyzes the attachment of threonine to tRNA(Thr) in a two-step reaction: L-threonine is first activated by ATP to form Thr-AMP and then transferred to the acceptor end of tRNA(Thr). Also edits incorrectly charged L-seryl-tRNA(Thr). This is Threonine--tRNA ligase from Orientia tsutsugamushi (strain Ikeda) (Rickettsia tsutsugamushi).